Consider the following 181-residue polypeptide: Protein CENTRORADIALIS (181 aa).

It belongs to the phosphatidylethanolamine-binding protein family. May form homodimers in solution.

The protein resides in the cytoplasm. Its function is as follows. Expression of CEN leads to a morphological switch between shoot growth and the development of flower structures (inflorescence). May form complexes with phosphorylated ligands by interfering with kinases and their effectors. In Antirrhinum majus (Garden snapdragon), this protein is Protein CENTRORADIALIS (CEN).